Here is a 292-residue protein sequence, read N- to C-terminus: Elongation factor Ts (292 aa).

An involved in Mg(2+) ion dislocation from EF-Tu region spans residues 81 to 84 (TDFV).

This sequence belongs to the EF-Ts family.

The protein resides in the cytoplasm. Associates with the EF-Tu.GDP complex and induces the exchange of GDP to GTP. It remains bound to the aminoacyl-tRNA.EF-Tu.GTP complex up to the GTP hydrolysis stage on the ribosome. This is Elongation factor Ts from Alkalilimnicola ehrlichii (strain ATCC BAA-1101 / DSM 17681 / MLHE-1).